A 290-amino-acid chain; its full sequence is Small ribosomal subunit protein bS6 (290 aa).

The interval 208–233 is disordered; it reads VEEAKTTAKKPAAPKMSAAERAKVDG.

This sequence belongs to the bacterial ribosomal protein bS6 family.

Binds together with bS18 to 16S ribosomal RNA. This is Small ribosomal subunit protein bS6 from Mesoplasma florum (strain ATCC 33453 / NBRC 100688 / NCTC 11704 / L1) (Acholeplasma florum).